The sequence spans 117 residues: Immunoglobulin heavy variable 1-2 (117 aa).

An N-terminal signal peptide occupies residues 1–19 (MDWTWRILFLVAAATGAHS). Q20 bears the Pyrrolidone carboxylic acid mark. Residues 20–44 (QVQLVQSGAEVKKPGASVKVSCKAS) are framework-1. Positions 20–117 (QVQLVQSGAE…DDTAVYYCAR (98 aa)) constitute an Ig-like domain. A disulfide bond links C41 and C115. Positions 45 to 52 (GYTFTGYY) are complementarity-determining-1. The framework-2 stretch occupies residues 53-69 (MHWVRQAPGQGLEWMGW). Residues 70 to 77 (INPNSGGT) form a complementarity-determining-2 region. Residues 78 to 115 (NYAQKFQGWVTMTRDTSISTAYMELSRLRSDDTAVYYC) form a framework-3 region. The segment at 116–117 (AR) is complementarity-determining-3.

As to quaternary structure, immunoglobulins are composed of two identical heavy chains and two identical light chains; disulfide-linked.

Its subcellular location is the secreted. It is found in the cell membrane. In terms of biological role, v region of the variable domain of immunoglobulin heavy chains that participates in the antigen recognition. Immunoglobulins, also known as antibodies, are membrane-bound or secreted glycoproteins produced by B lymphocytes. In the recognition phase of humoral immunity, the membrane-bound immunoglobulins serve as receptors which, upon binding of a specific antigen, trigger the clonal expansion and differentiation of B lymphocytes into immunoglobulins-secreting plasma cells. Secreted immunoglobulins mediate the effector phase of humoral immunity, which results in the elimination of bound antigens. The antigen binding site is formed by the variable domain of one heavy chain, together with that of its associated light chain. Thus, each immunoglobulin has two antigen binding sites with remarkable affinity for a particular antigen. The variable domains are assembled by a process called V-(D)-J rearrangement and can then be subjected to somatic hypermutations which, after exposure to antigen and selection, allow affinity maturation for a particular antigen. This Homo sapiens (Human) protein is Immunoglobulin heavy variable 1-2.